A 291-amino-acid chain; its full sequence is Phosphatidylserine decarboxylase proenzyme (291 aa).

Active-site charge relay system; for autoendoproteolytic cleavage activity residues include D93, H150, and S253. S253 acts as the Schiff-base intermediate with substrate; via pyruvic acid; for decarboxylase activity in catalysis. The residue at position 253 (S253) is a Pyruvic acid (Ser); by autocatalysis.

Belongs to the phosphatidylserine decarboxylase family. PSD-B subfamily. Prokaryotic type I sub-subfamily. Heterodimer of a large membrane-associated beta subunit and a small pyruvoyl-containing alpha subunit. Pyruvate serves as cofactor. Is synthesized initially as an inactive proenzyme. Formation of the active enzyme involves a self-maturation process in which the active site pyruvoyl group is generated from an internal serine residue via an autocatalytic post-translational modification. Two non-identical subunits are generated from the proenzyme in this reaction, and the pyruvate is formed at the N-terminus of the alpha chain, which is derived from the carboxyl end of the proenzyme. The autoendoproteolytic cleavage occurs by a canonical serine protease mechanism, in which the side chain hydroxyl group of the serine supplies its oxygen atom to form the C-terminus of the beta chain, while the remainder of the serine residue undergoes an oxidative deamination to produce ammonia and the pyruvoyl prosthetic group on the alpha chain. During this reaction, the Ser that is part of the protease active site of the proenzyme becomes the pyruvoyl prosthetic group, which constitutes an essential element of the active site of the mature decarboxylase.

The protein resides in the cell membrane. The catalysed reaction is a 1,2-diacyl-sn-glycero-3-phospho-L-serine + H(+) = a 1,2-diacyl-sn-glycero-3-phosphoethanolamine + CO2. Its pathway is phospholipid metabolism; phosphatidylethanolamine biosynthesis; phosphatidylethanolamine from CDP-diacylglycerol: step 2/2. Its function is as follows. Catalyzes the formation of phosphatidylethanolamine (PtdEtn) from phosphatidylserine (PtdSer). The polypeptide is Phosphatidylserine decarboxylase proenzyme (Alcanivorax borkumensis (strain ATCC 700651 / DSM 11573 / NCIMB 13689 / SK2)).